The sequence spans 366 residues: Aminomethyltransferase (366 aa).

It belongs to the GcvT family. The glycine cleavage system is composed of four proteins: P, T, L and H.

It carries out the reaction N(6)-[(R)-S(8)-aminomethyldihydrolipoyl]-L-lysyl-[protein] + (6S)-5,6,7,8-tetrahydrofolate = N(6)-[(R)-dihydrolipoyl]-L-lysyl-[protein] + (6R)-5,10-methylene-5,6,7,8-tetrahydrofolate + NH4(+). The glycine cleavage system catalyzes the degradation of glycine. In Bacillus anthracis (strain A0248), this protein is Aminomethyltransferase.